The chain runs to 1909 residues: Receptor-type tyrosine-protein phosphatase F (1909 aa).

The first 31 residues, 1–31 (MVPNTCTSVPLLPVGLPLLLLLSCIQFSSQA), serve as a signal peptide directing secretion. At 32 to 1266 (DSLPNFVRSP…RSVDQPEMLW (1235 aa)) the chain is on the extracellular side. Ig-like C2-type domains lie at 35 to 125 (PNFV…AKLT), 137 to 225 (PTID…ANLY), and 233 to 315 (PRFS…AQVS). The cysteines at positions 56 and 109 are disulfide-linked. 68–77 (WMKKGKKVSS) provides a ligand contact to heparin. N-linked (GlcNAc...) asparagine glycosylation is present at asparagine 119. Residues cysteine 158 and cysteine 208 are joined by a disulfide bond. N-linked (GlcNAc...) asparagine glycans are attached at residues asparagine 251 and asparagine 296. A disulfide bond links cysteine 254 and cysteine 299. 8 consecutive Fibronectin type-III domains span residues 322–412 (PPTS…TGEQ), 417–511 (PPLH…TQQG), 515–604 (QPSS…TAQS), 609–706 (PPQD…TNED), 711–819 (PPRK…TTGA), 820–914 (VPGK…PEDV), 918–1013 (FPLN…TSPA), and 1014–1098 (FATS…TAPD). The tract at residues 399–418 (GPPSEPVETRTGEQAPSSPP) is disordered. An N-linked (GlcNAc...) asparagine glycan is attached at asparagine 721. Asparagine 963 and asparagine 966 each carry an N-linked (GlcNAc...) asparagine glycan. A helical membrane pass occupies residues 1267–1287 (VMGPVLAVVLIIIIVIAILLF). Topologically, residues 1288 to 1909 (KRKRASPLPK…YLGSFDHYAT (622 aa)) are cytoplasmic. Tyrosine-protein phosphatase domains are found at residues 1354 to 1609 (FSQE…LLEA) and 1641 to 1900 (MELE…ALEY). Substrate contacts are provided by residues aspartate 1518, 1550–1556 (CSAGVGR), and glutamine 1594. Residue cysteine 1550 is the Phosphocysteine intermediate of the active site. The Phosphocysteine intermediate role is filled by cysteine 1841.

It belongs to the protein-tyrosine phosphatase family. Receptor class 2A subfamily.

The protein localises to the membrane. It catalyses the reaction O-phospho-L-tyrosyl-[protein] + H2O = L-tyrosyl-[protein] + phosphate. Functionally, possible cell adhesion receptor. It possesses an intrinsic protein tyrosine phosphatase activity (PTPase). Its function is as follows. The first PTPase domain has enzymatic activity, while the second one seems to affect the substrate specificity of the first one. The sequence is that of Receptor-type tyrosine-protein phosphatase F (ptprf) from Danio rerio (Zebrafish).